The chain runs to 96 residues: Co-chaperonin GroES (96 aa).

Belongs to the GroES chaperonin family. Heptamer of 7 subunits arranged in a ring. Interacts with the chaperonin GroEL.

Its subcellular location is the cytoplasm. Together with the chaperonin GroEL, plays an essential role in assisting protein folding. The GroEL-GroES system forms a nano-cage that allows encapsulation of the non-native substrate proteins and provides a physical environment optimized to promote and accelerate protein folding. GroES binds to the apical surface of the GroEL ring, thereby capping the opening of the GroEL channel. The sequence is that of Co-chaperonin GroES from Paracidovorax citrulli (strain AAC00-1) (Acidovorax citrulli).